Here is a 132-residue protein sequence, read N- to C-terminus: Histone H2A.1 (132 aa).

The interval 1-21 (MSGGKGKAGTSEKASTSRSAK) is disordered. S2 is modified (N-acetylserine). 2 positions are modified to N6-acetyllysine: K5 and K7. The residue at position 105 (Q105) is an N5-methylglutamine. S129 carries the phosphoserine modification. The [ST]-Q motif motif lies at 129-130 (SQ).

It belongs to the histone H2A family. In terms of assembly, the nucleosome is a histone octamer containing two molecules each of H2A, H2B, H3 and H4 assembled in one H3-H4 heterotetramer and two H2A-H2B heterodimers. The octamer wraps approximately 147 bp of DNA. In terms of processing, phosphorylated to form H2AS128ph (gamma-H2A) in response to DNA double-strand breaks (DSBs) generated by exogenous genotoxic agents and by stalled replication forks. Phosphorylation is dependent on the DNA damage checkpoint kinases MEC1/ATR and TEL1/ATM, spreads on either side of a detected DSB site and may mark the surrounding chromatin for recruitment of proteins required for DNA damage signaling and repair. Gamma-H2A is removed from the DNA prior to the strand invasion-primer extension step of the repair process and subsequently dephosphorylated. Dephosphorylation is necessary for efficient recovery from the DNA damage checkpoint. Post-translationally, acetylated by ESA1 to form H2AK4ac and H2AK7ac.

The protein resides in the nucleus. It is found in the chromosome. Functionally, core component of nucleosome which plays a central role in DNA double strand break (DSB) repair. Nucleosomes wrap and compact DNA into chromatin, limiting DNA accessibility to the cellular machineries which require DNA as a template. Histones thereby play a central role in transcription regulation, DNA repair, DNA replication and chromosomal stability. DNA accessibility is regulated via a complex set of post-translational modifications of histones, also called histone code, and nucleosome remodeling. This is Histone H2A.1 (HTA1) from Candida albicans (strain SC5314 / ATCC MYA-2876) (Yeast).